A 309-amino-acid polypeptide reads, in one-letter code: Protein FdhE (309 aa).

It belongs to the FdhE family.

The protein localises to the cytoplasm. Functionally, necessary for formate dehydrogenase activity. The protein is Protein FdhE of Escherichia coli (strain SMS-3-5 / SECEC).